Here is a 258-residue protein sequence, read N- to C-terminus: Imidazole glycerol phosphate synthase subunit HisF (258 aa).

Catalysis depends on residues aspartate 11 and aspartate 130.

Belongs to the HisA/HisF family. In terms of assembly, heterodimer of HisH and HisF.

The protein localises to the cytoplasm. The enzyme catalyses 5-[(5-phospho-1-deoxy-D-ribulos-1-ylimino)methylamino]-1-(5-phospho-beta-D-ribosyl)imidazole-4-carboxamide + L-glutamine = D-erythro-1-(imidazol-4-yl)glycerol 3-phosphate + 5-amino-1-(5-phospho-beta-D-ribosyl)imidazole-4-carboxamide + L-glutamate + H(+). It participates in amino-acid biosynthesis; L-histidine biosynthesis; L-histidine from 5-phospho-alpha-D-ribose 1-diphosphate: step 5/9. IGPS catalyzes the conversion of PRFAR and glutamine to IGP, AICAR and glutamate. The HisF subunit catalyzes the cyclization activity that produces IGP and AICAR from PRFAR using the ammonia provided by the HisH subunit. The chain is Imidazole glycerol phosphate synthase subunit HisF from Methylorubrum extorquens (strain CM4 / NCIMB 13688) (Methylobacterium extorquens).